The primary structure comprises 137 residues: Large ribosomal subunit protein uL16 (137 aa).

This sequence belongs to the universal ribosomal protein uL16 family. As to quaternary structure, part of the 50S ribosomal subunit.

Its function is as follows. Binds 23S rRNA and is also seen to make contacts with the A and possibly P site tRNAs. This Psychrobacter sp. (strain PRwf-1) protein is Large ribosomal subunit protein uL16.